The chain runs to 366 residues: Chorismate synthase (366 aa).

Residues Arg48 and Arg54 each coordinate NADP(+). FMN-binding positions include 125–127 (RSS), 238–239 (NA), Gly278, 293–297 (KPTSS), and Arg319.

It belongs to the chorismate synthase family. As to quaternary structure, homotetramer. FMNH2 serves as cofactor.

The catalysed reaction is 5-O-(1-carboxyvinyl)-3-phosphoshikimate = chorismate + phosphate. Its pathway is metabolic intermediate biosynthesis; chorismate biosynthesis; chorismate from D-erythrose 4-phosphate and phosphoenolpyruvate: step 7/7. Catalyzes the anti-1,4-elimination of the C-3 phosphate and the C-6 proR hydrogen from 5-enolpyruvylshikimate-3-phosphate (EPSP) to yield chorismate, which is the branch point compound that serves as the starting substrate for the three terminal pathways of aromatic amino acid biosynthesis. This reaction introduces a second double bond into the aromatic ring system. The chain is Chorismate synthase from Burkholderia ambifaria (strain MC40-6).